Here is a 249-residue protein sequence, read N- to C-terminus: MPTLLELSSVLPLAELEVGQHFYWQIGNYRLHGQVFLTSWFVIAALVVLSLLANRNLQRIPSGLQNFMEYVLDFIRNLARTQIGEKEYRPWVPFIGTLFLFIFLSNWSGALIPWKLIKLPSGELAAPTSDINTTVALALLTSLAYFYAGFSRKGLGYFGNYVHPTPVMLPFKILEDFTKPLSLSFRLFGNILADELVVAVLVLLVPLFVPLPAMILGLFTSAIQALIFATLAASYIGEAVEEHGEEHAE.

The next 5 membrane-spanning stretches (helical) occupy residues 33–53 (GQVF…SLLA), 92–112 (VPFI…GALI), 131–151 (INTT…AGFS), 196–216 (LVVA…AMIL), and 217–237 (GLFT…SYIG).

This sequence belongs to the ATPase A chain family. F-type ATPases have 2 components, CF(1) - the catalytic core - and CF(0) - the membrane proton channel. CF(1) has five subunits: alpha(3), beta(3), gamma(1), delta(1), epsilon(1). CF(0) has four main subunits: a, b, b' and c.

It is found in the cellular thylakoid membrane. Key component of the proton channel; it plays a direct role in the translocation of protons across the membrane. The chain is ATP synthase subunit a from Synechococcus elongatus (strain ATCC 33912 / PCC 7942 / FACHB-805) (Anacystis nidulans R2).